The sequence spans 362 residues: Chorismate synthase (362 aa).

R48 and R54 together coordinate NADP(+). Residues 131 to 133 (RSS), 243 to 244 (NA), G287, 302 to 306 (KPTSS), and R328 each bind FMN.

It belongs to the chorismate synthase family. In terms of assembly, homotetramer. FMNH2 serves as cofactor.

It catalyses the reaction 5-O-(1-carboxyvinyl)-3-phosphoshikimate = chorismate + phosphate. Its pathway is metabolic intermediate biosynthesis; chorismate biosynthesis; chorismate from D-erythrose 4-phosphate and phosphoenolpyruvate: step 7/7. Catalyzes the anti-1,4-elimination of the C-3 phosphate and the C-6 proR hydrogen from 5-enolpyruvylshikimate-3-phosphate (EPSP) to yield chorismate, which is the branch point compound that serves as the starting substrate for the three terminal pathways of aromatic amino acid biosynthesis. This reaction introduces a second double bond into the aromatic ring system. The sequence is that of Chorismate synthase from Rhodopseudomonas palustris (strain TIE-1).